A 464-amino-acid chain; its full sequence is Siroheme synthase (464 aa).

The interval 1-203 (MEYLPLFHNL…GQGAEAERLL (203 aa)) is precorrin-2 dehydrogenase /sirohydrochlorin ferrochelatase. NAD(+) is bound by residues 22–23 (EI) and 43–44 (PE). The residue at position 128 (Ser-128) is a Phosphoserine. The tract at residues 216 to 464 (GEVYLVGAGP…AWFEGAQSEV (249 aa)) is uroporphyrinogen-III C-methyltransferase. Pro-225 provides a ligand contact to S-adenosyl-L-methionine. Asp-248 acts as the Proton acceptor in catalysis. Lys-270 serves as the catalytic Proton donor. S-adenosyl-L-methionine-binding positions include 301–303 (GGD), Ile-306, 331–332 (TA), Met-383, and Gly-412.

The protein in the N-terminal section; belongs to the precorrin-2 dehydrogenase / sirohydrochlorin ferrochelatase family. In the C-terminal section; belongs to the precorrin methyltransferase family.

The enzyme catalyses uroporphyrinogen III + 2 S-adenosyl-L-methionine = precorrin-2 + 2 S-adenosyl-L-homocysteine + H(+). It carries out the reaction precorrin-2 + NAD(+) = sirohydrochlorin + NADH + 2 H(+). It catalyses the reaction siroheme + 2 H(+) = sirohydrochlorin + Fe(2+). Its pathway is cofactor biosynthesis; adenosylcobalamin biosynthesis; precorrin-2 from uroporphyrinogen III: step 1/1. It participates in cofactor biosynthesis; adenosylcobalamin biosynthesis; sirohydrochlorin from precorrin-2: step 1/1. It functions in the pathway porphyrin-containing compound metabolism; siroheme biosynthesis; precorrin-2 from uroporphyrinogen III: step 1/1. The protein operates within porphyrin-containing compound metabolism; siroheme biosynthesis; siroheme from sirohydrochlorin: step 1/1. Its pathway is porphyrin-containing compound metabolism; siroheme biosynthesis; sirohydrochlorin from precorrin-2: step 1/1. In terms of biological role, multifunctional enzyme that catalyzes the SAM-dependent methylations of uroporphyrinogen III at position C-2 and C-7 to form precorrin-2 via precorrin-1. Then it catalyzes the NAD-dependent ring dehydrogenation of precorrin-2 to yield sirohydrochlorin. Finally, it catalyzes the ferrochelation of sirohydrochlorin to yield siroheme. The polypeptide is Siroheme synthase (Pseudomonas fluorescens (strain ATCC BAA-477 / NRRL B-23932 / Pf-5)).